Consider the following 435-residue polypeptide: Probable alpha-galactosidase B (435 aa).

Positions 1-18 (MLTSLSLTALALLPSANA) are cleaved as a signal peptide. Cys-41 and Cys-73 are joined by a disulfide. N-linked (GlcNAc...) asparagine glycosylation is present at Asn-81. A disulfide bond links Cys-123 and Cys-153. The Nucleophile role is filled by Asp-151. Residues Asn-158 and Asn-176 are each glycosylated (N-linked (GlcNAc...) asparagine). Substrate is bound at residue 221–225 (DWGQA). An N-linked (GlcNAc...) asparagine glycan is attached at Asn-232. Catalysis depends on Asp-243, which acts as the Proton donor. An N-linked (GlcNAc...) asparagine glycan is attached at Asn-378.

Belongs to the glycosyl hydrolase 27 family.

The protein resides in the secreted. It carries out the reaction Hydrolysis of terminal, non-reducing alpha-D-galactose residues in alpha-D-galactosides, including galactose oligosaccharides, galactomannans and galactolipids.. Its function is as follows. Hydrolyzes a variety of simple alpha-D-galactoside as well as more complex molecules such as oligosaccharides and polysaccharides. The polypeptide is Probable alpha-galactosidase B (agl1) (Penicillium simplicissimum).